We begin with the raw amino-acid sequence, 227 residues long: Cytochrome c oxidase subunit 2 (227 aa).

Residues 1 to 14 lie on the Mitochondrial intermembrane side of the membrane; that stretch reads MAYPFQLGLQDATS. The helical transmembrane segment at 15 to 45 threads the bilayer; it reads PIMEELMNFHDHTLMIVFLISSLVLYIISLM. Topologically, residues 46 to 59 are mitochondrial matrix; the sequence is LTTKLTHTSTMDAQ. Residues 60-87 traverse the membrane as a helical segment; sequence EVETIWTILPAVILILIALPSLRILYMM. Topologically, residues 88-227 are mitochondrial intermembrane; the sequence is DEINNPVLTV…NFENWSASMI (140 aa). Positions 161, 196, 198, 200, 204, and 207 each coordinate Cu cation. Residue E198 participates in Mg(2+) binding.

Belongs to the cytochrome c oxidase subunit 2 family. As to quaternary structure, component of the cytochrome c oxidase (complex IV, CIV), a multisubunit enzyme composed of 14 subunits. The complex is composed of a catalytic core of 3 subunits MT-CO1, MT-CO2 and MT-CO3, encoded in the mitochondrial DNA, and 11 supernumerary subunits COX4I, COX5A, COX5B, COX6A, COX6B, COX6C, COX7A, COX7B, COX7C, COX8 and NDUFA4, which are encoded in the nuclear genome. The complex exists as a monomer or a dimer and forms supercomplexes (SCs) in the inner mitochondrial membrane with NADH-ubiquinone oxidoreductase (complex I, CI) and ubiquinol-cytochrome c oxidoreductase (cytochrome b-c1 complex, complex III, CIII), resulting in different assemblies (supercomplex SCI(1)III(2)IV(1) and megacomplex MCI(2)III(2)IV(2)). Found in a complex with TMEM177, COA6, COX18, COX20, SCO1 and SCO2. Interacts with TMEM177 in a COX20-dependent manner. Interacts with COX20. Interacts with COX16. Cu cation serves as cofactor.

Its subcellular location is the mitochondrion inner membrane. The catalysed reaction is 4 Fe(II)-[cytochrome c] + O2 + 8 H(+)(in) = 4 Fe(III)-[cytochrome c] + 2 H2O + 4 H(+)(out). Functionally, component of the cytochrome c oxidase, the last enzyme in the mitochondrial electron transport chain which drives oxidative phosphorylation. The respiratory chain contains 3 multisubunit complexes succinate dehydrogenase (complex II, CII), ubiquinol-cytochrome c oxidoreductase (cytochrome b-c1 complex, complex III, CIII) and cytochrome c oxidase (complex IV, CIV), that cooperate to transfer electrons derived from NADH and succinate to molecular oxygen, creating an electrochemical gradient over the inner membrane that drives transmembrane transport and the ATP synthase. Cytochrome c oxidase is the component of the respiratory chain that catalyzes the reduction of oxygen to water. Electrons originating from reduced cytochrome c in the intermembrane space (IMS) are transferred via the dinuclear copper A center (CU(A)) of subunit 2 and heme A of subunit 1 to the active site in subunit 1, a binuclear center (BNC) formed by heme A3 and copper B (CU(B)). The BNC reduces molecular oxygen to 2 water molecules using 4 electrons from cytochrome c in the IMS and 4 protons from the mitochondrial matrix. This Maxomys bartelsii (Bartels's Javan maxomys) protein is Cytochrome c oxidase subunit 2 (MT-CO2).